The primary structure comprises 387 residues: Gamma-butyrobetaine dioxygenase (387 aa).

C38, C40, C43, and H82 together coordinate Zn(2+). Positions 202, 204, and 347 each coordinate Fe cation. S351 is subject to Phosphoserine.

This sequence belongs to the gamma-BBH/TMLD family. Fe(2+) is required as a cofactor. It depends on L-ascorbate as a cofactor.

It is found in the cytoplasm. It catalyses the reaction 4-(trimethylamino)butanoate + 2-oxoglutarate + O2 = carnitine + succinate + CO2. It functions in the pathway amine and polyamine biosynthesis; carnitine biosynthesis. In terms of biological role, catalyzes the formation of L-carnitine from gamma-butyrobetaine. The chain is Gamma-butyrobetaine dioxygenase (Bbox1) from Mus musculus (Mouse).